Consider the following 1620-residue polypeptide: ABC-type organic anion transporter ABCA8A (1620 aa).

7 helical membrane-spanning segments follow: residues 30 to 50, 224 to 244, 263 to 283, 294 to 314, 328 to 348, 357 to 377, and 397 to 417; these read TFLEFLYTALILLSLILFLQL, CFLFFCIIRFSPLTYYISAGV, SAFWLSWGLLYGVIVFVVTLL, VFLTGFMVIFSLFFFYGLSLI, FLTDLVVFLLTVSCGSLGFTA, LEWLLSLLSPFAFMLGMVQLL, and IGTIFMLFFDGVFYLLLTFYF. N-linked (GlcNAc...) asparagine glycosylation is found at asparagine 454 and asparagine 482. Positions 478–713 constitute an ABC transporter 1 domain; it reads IRIRNLTKDY…WGIGYHLSLQ (236 aa). 514 to 521 is a binding site for ATP; sequence GHSGAGKS. A helical transmembrane segment spans residues 861–881; sequence IVILILVLGIGLLHILSANIY. Residue asparagine 967 is glycosylated (N-linked (GlcNAc...) asparagine). Transmembrane regions (helical) follow at residues 979-999, 1019-1039, 1068-1088, 1105-1125, 1133-1153, 1159-1179, and 1196-1216; these read CFPVLVDIVSNGLLGLFAPSA, YLAYFFLWVLLMACVPPYISM, ALFEVPVYCALILSIFIAFYA, ILYVGGYAMSVIFMTYVISFI, SGLWSLCFYIVSFFSMCFMLI, ISLFVLIALVPPATLGGCTLL, and EYSYLFFLAPLLHFAIFVVIL. Positions 1284–1517 constitute an ABC transporter 2 domain; the sequence is LRKEYKGKKK…FGKEYLLEMK (234 aa). 1322 to 1329 is a binding site for ATP; it reads GHNGAGKS.

It belongs to the ABC transporter superfamily. ABCA family. Expressed in lung, heart, liver, skeletal muscle and testis. Highly expressed in the liver, and is also abundant in heart and skeletal muscle. Highly expressed in heart.

The protein localises to the cell membrane. Its subcellular location is the basolateral cell membrane. It carries out the reaction taurocholate(in) + ATP + H2O = taurocholate(out) + ADP + phosphate + H(+). The enzyme catalyses cholesterol(in) + ATP + H2O = cholesterol(out) + ADP + phosphate + H(+). With respect to regulation, cholesterol efflux is increased by extracellularly applied taurocholate. In terms of biological role, mediates cholesterol and taurocholate efflux. Through the interaction with ABCA1 potentiates the cholesterol efflux to lipid-free APOA1, in turn regulates high-density lipoprotein cholesterol levels. This chain is ABC-type organic anion transporter ABCA8A, found in Mus musculus (Mouse).